We begin with the raw amino-acid sequence, 159 residues long: Phosphopantetheine adenylyltransferase (159 aa).

Residue S9 coordinates substrate. Residues 9–10 (SF) and H17 each bind ATP. K41, L73, and K87 together coordinate substrate. ATP is bound by residues 88–90 (GLR), E98, and 123–129 (YGYLSSS).

This sequence belongs to the bacterial CoaD family. Homohexamer. Mg(2+) serves as cofactor.

The protein resides in the cytoplasm. The enzyme catalyses (R)-4'-phosphopantetheine + ATP + H(+) = 3'-dephospho-CoA + diphosphate. It participates in cofactor biosynthesis; coenzyme A biosynthesis; CoA from (R)-pantothenate: step 4/5. In terms of biological role, reversibly transfers an adenylyl group from ATP to 4'-phosphopantetheine, yielding dephospho-CoA (dPCoA) and pyrophosphate. This chain is Phosphopantetheine adenylyltransferase, found in Thermoanaerobacter pseudethanolicus (strain ATCC 33223 / 39E) (Clostridium thermohydrosulfuricum).